The chain runs to 405 residues: Phosphopentomutase (405 aa).

Mn(2+)-binding residues include aspartate 10, aspartate 303, histidine 308, aspartate 344, histidine 345, and histidine 356.

The protein belongs to the phosphopentomutase family. Mn(2+) serves as cofactor.

It localises to the cytoplasm. It carries out the reaction 2-deoxy-alpha-D-ribose 1-phosphate = 2-deoxy-D-ribose 5-phosphate. It catalyses the reaction alpha-D-ribose 1-phosphate = D-ribose 5-phosphate. It functions in the pathway carbohydrate degradation; 2-deoxy-D-ribose 1-phosphate degradation; D-glyceraldehyde 3-phosphate and acetaldehyde from 2-deoxy-alpha-D-ribose 1-phosphate: step 1/2. Functionally, isomerase that catalyzes the conversion of deoxy-ribose 1-phosphate (dRib-1-P) and ribose 1-phosphate (Rib-1-P) to deoxy-ribose 5-phosphate (dRib-5-P) and ribose 5-phosphate (Rib-5-P), respectively. The sequence is that of Phosphopentomutase from Shewanella woodyi (strain ATCC 51908 / MS32).